The primary structure comprises 351 residues: Protein Tex24 (351 aa).

Disordered regions lie at residues 69–101 (PSTA…PSLS), 117–144 (PEDR…AQGK), and 275–298 (EKVK…PKSM). Residues 73–83 (HGKRKPGHLPR) are compositionally biased toward basic residues. Positions 275-285 (EKVKPSSHDMH) are enriched in basic and acidic residues.

In terms of tissue distribution, specific to testis, where it is expressed in spermatogonia.

The protein localises to the nucleus. Functionally, nuclear factor which might have a role in spermatogenesis. This is Protein Tex24 from Mus musculus (Mouse).